A 469-amino-acid chain; its full sequence is Neuraminidase (469 aa).

Topologically, residues 1 to 9 (MNPNQKIIT) are intravirion. A helical membrane pass occupies residues 10–30 (IGSVSLTIATICFLMQIAILV). The tract at residues 11-33 (GSVSLTIATICFLMQIAILVTTV) is involved in apical transport and lipid raft association. The Virion surface segment spans residues 31–469 (TTVTLHFKQY…DGADINLMPI (439 aa)). The hypervariable stalk region stretch occupies residues 36-88 (HFKQYECSSPPNNQVIPCQPTIIERNITEIVYLTNTTIEKEICPKLVEYRNWS). N-linked (GlcNAc...) asparagine; by host glycosylation is found at Asn61, Asn70, and Asn86. Positions 91-469 (QCKITGFAPF…DGADINLMPI (379 aa)) are head of neuraminidase. 8 disulfides stabilise this stretch: Cys92-Cys417, Cys124-Cys129, Cys183-Cys230, Cys232-Cys237, Cys278-Cys291, Cys280-Cys289, Cys318-Cys337, and Cys421-Cys447. Arg118 contributes to the substrate binding site. Residue Asn146 is glycosylated (N-linked (GlcNAc...) asparagine; by host). Asp151 functions as the Proton donor/acceptor in the catalytic mechanism. A substrate-binding site is contributed by Arg152. N-linked (GlcNAc...) asparagine; by host glycosylation is found at Asn200 and Asn234. Substrate is bound at residue 276–277 (EE). Arg292 provides a ligand contact to substrate. Residues Asp293, Gly297, and Asp324 each coordinate Ca(2+). The interval 326–350 (PRKNDSSSSSYCQNPNNEKGSHGVK) is disordered. Asn329 carries an N-linked (GlcNAc...) asparagine; by host glycan. Residues 331-343 (SSSSSYCQNPNNE) show a composition bias toward polar residues. Arg371 serves as a coordination point for substrate. Asn402 carries an N-linked (GlcNAc...) asparagine; by host glycan. Residue Tyr406 is the Nucleophile of the active site.

It belongs to the glycosyl hydrolase 34 family. Homotetramer. Ca(2+) serves as cofactor. Post-translationally, N-glycosylated.

The protein resides in the virion membrane. The protein localises to the host apical cell membrane. The enzyme catalyses Hydrolysis of alpha-(2-&gt;3)-, alpha-(2-&gt;6)-, alpha-(2-&gt;8)- glycosidic linkages of terminal sialic acid residues in oligosaccharides, glycoproteins, glycolipids, colominic acid and synthetic substrates.. Inhibited by the neuraminidase inhibitors zanamivir (Relenza) and oseltamivir (Tamiflu). These drugs interfere with the release of progeny virus from infected cells and are effective against all influenza strains. Resistance to neuraminidase inhibitors is quite rare. Its function is as follows. Catalyzes the removal of terminal sialic acid residues from viral and cellular glycoconjugates. Cleaves off the terminal sialic acids on the glycosylated HA during virus budding to facilitate virus release. Additionally helps virus spread through the circulation by further removing sialic acids from the cell surface. These cleavages prevent self-aggregation and ensure the efficient spread of the progeny virus from cell to cell. Otherwise, infection would be limited to one round of replication. Described as a receptor-destroying enzyme because it cleaves a terminal sialic acid from the cellular receptors. May facilitate viral invasion of the upper airways by cleaving the sialic acid moieties on the mucin of the airway epithelial cells. Likely to plays a role in the budding process through its association with lipid rafts during intracellular transport. May additionally display a raft-association independent effect on budding. Plays a role in the determination of host range restriction on replication and virulence. Sialidase activity in late endosome/lysosome traffic seems to enhance virus replication. The polypeptide is Neuraminidase (Influenza A virus (strain A/Kitakyushu/159/1993 H3N2)).